The sequence spans 340 residues: Sterol-4-alpha-carboxylate 3-dehydrogenase erg26, decarboxylating (340 aa).

Catalysis depends on tyrosine 144, which acts as the Proton acceptor. Position 148 (lysine 148) interacts with NAD(+).

It belongs to the 3-beta-HSD family. Heterotetramer of erg25, erg26, erg27 and erg28. Erg28 acts as a scaffold to tether erg27 and other 4,4-demethylation-related enzymes, forming a demethylation enzyme complex, in the endoplasmic reticulum.

The protein localises to the endoplasmic reticulum membrane. It carries out the reaction 4beta-methylzymosterol-4alpha-carboxylate + NADP(+) = 3-dehydro-4-methylzymosterol + CO2 + NADPH. It participates in steroid biosynthesis; zymosterol biosynthesis; zymosterol from lanosterol: step 4/6. The protein operates within steroid metabolism; ergosterol biosynthesis. Its function is as follows. Sterol-4-alpha-carboxylate 3-dehydrogenase; part of the third module of ergosterol biosynthesis pathway that includes by the late steps of the pathway. Erg26 is a catalytic component of the C-4 demethylation complex that catalyzes the oxidative decarboxylation that results in a reduction of the 3-beta-hydroxy group at the C-3 carbon to an oxo group. The third module or late pathway involves the ergosterol synthesis itself through consecutive reactions that mainly occur in the endoplasmic reticulum (ER) membrane. Firstly, the squalene synthase erg9 catalyzes the condensation of 2 farnesyl pyrophosphate moieties to form squalene, which is the precursor of all steroids. Secondly, squalene is converted into lanosterol by the consecutive action of the squalene epoxidase erg1 and the lanosterol synthase erg7. The lanosterol 14-alpha-demethylase erg11/cyp1 catalyzes C14-demethylation of lanosterol to produce 4,4'-dimethyl cholesta-8,14,24-triene-3-beta-ol. In the next steps, a complex process involving various demethylation, reduction and desaturation reactions catalyzed by the C-14 reductase erg24 and the C-4 demethylation complex erg25-erg26-erg27 leads to the production of zymosterol. Erg28 likely functions in the C-4 demethylation complex reaction by tethering erg26 and Erg27 to the endoplasmic reticulum or to facilitate interaction between these proteins. Then, the sterol 24-C-methyltransferase erg6 catalyzes the methyl transfer from S-adenosyl-methionine to the C-24 of zymosterol to form fecosterol. The C-8 sterol isomerase erg2 catalyzes the reaction which results in unsaturation at C-7 in the B ring of sterols and thus converts fecosterol to episterol. The sterol-C5-desaturases erg31 and erg32 then catalyze the introduction of a C-5 double bond in the B ring to produce 5-dehydroepisterol. The C-22 sterol desaturase erg5 further converts 5-dehydroepisterol into ergosta-5,7,22,24(28)-tetraen-3beta-ol by forming the C-22(23) double bond in the sterol side chain. Finally, ergosta-5,7,22,24(28)-tetraen-3beta-ol is substrate of the C-24(28) sterol reductase erg4 to produce ergosterol. In the genus Schizosaccharomyces, a second route exists between lanosterol and fecosterol, via the methylation of lanosterol to eburicol by erg6, followed by C14-demethylation by erg11/cyp1 and C4-demethylation by the demethylation complex erg25-erg26-erg27. The polypeptide is Sterol-4-alpha-carboxylate 3-dehydrogenase erg26, decarboxylating (Schizosaccharomyces pombe (strain 972 / ATCC 24843) (Fission yeast)).